The primary structure comprises 481 residues: Threonine synthase (481 aa).

N6-(pyridoxal phosphate)lysine is present on K118.

The protein belongs to the threonine synthase family. In terms of assembly, monomer. Requires pyridoxal 5'-phosphate as cofactor.

The enzyme catalyses O-phospho-L-homoserine + H2O = L-threonine + phosphate. It participates in amino-acid biosynthesis; L-threonine biosynthesis; L-threonine from L-aspartate: step 5/5. Functionally, catalyzes the gamma-elimination of phosphate from L-phosphohomoserine and the beta-addition of water to produce L-threonine. This Corynebacterium glutamicum (strain ATCC 13032 / DSM 20300 / JCM 1318 / BCRC 11384 / CCUG 27702 / LMG 3730 / NBRC 12168 / NCIMB 10025 / NRRL B-2784 / 534) protein is Threonine synthase (thrC).